A 142-amino-acid polypeptide reads, in one-letter code: Small ribosomal subunit protein uS19 (142 aa).

This sequence belongs to the universal ribosomal protein uS19 family. In terms of assembly, component of the small ribosomal subunit. Mature ribosomes consist of a small (40S) and a large (60S) subunit. The 40S subunit contains about 32 different proteins and 1 molecule of RNA (18S). The 60S subunit contains 45 different proteins and 3 molecules of RNA (25S, 5.8S and 5S).

Its subcellular location is the cytoplasm. Functionally, component of the ribosome, a large ribonucleoprotein complex responsible for the synthesis of proteins in the cell. The small ribosomal subunit (SSU) binds messenger RNAs (mRNAs) and translates the encoded message by selecting cognate aminoacyl-transfer RNA (tRNA) molecules. The large subunit (LSU) contains the ribosomal catalytic site termed the peptidyl transferase center (PTC), which catalyzes the formation of peptide bonds, thereby polymerizing the amino acids delivered by tRNAs into a polypeptide chain. The nascent polypeptides leave the ribosome through a tunnel in the LSU and interact with protein factors that function in enzymatic processing, targeting, and the membrane insertion of nascent chains at the exit of the ribosomal tunnel. RPS15 has a role in the late stage of the assembly of pre-40S particles within the nucleus and controls their export to the cytoplasm. In Candida albicans (strain SC5314 / ATCC MYA-2876) (Yeast), this protein is Small ribosomal subunit protein uS19 (RPS15).